The sequence spans 50 residues: Large ribosomal subunit protein bL33B (50 aa).

Belongs to the bacterial ribosomal protein bL33 family.

In Streptococcus pneumoniae (strain ATCC BAA-255 / R6), this protein is Large ribosomal subunit protein bL33B.